The following is a 293-amino-acid chain: Elongation factor Ts (293 aa).

Residues 80–83 form an involved in Mg(2+) ion dislocation from EF-Tu region; sequence TDFV.

It belongs to the EF-Ts family.

The protein localises to the cytoplasm. Associates with the EF-Tu.GDP complex and induces the exchange of GDP to GTP. It remains bound to the aminoacyl-tRNA.EF-Tu.GTP complex up to the GTP hydrolysis stage on the ribosome. This is Elongation factor Ts from Burkholderia ambifaria (strain MC40-6).